A 710-amino-acid chain; its full sequence is Bifunctional lysine-specific demethylase and histidyl-hydroxylase NO66 (710 aa).

The tract at residues 103-137 (TDEMNKTKKKQKKIMKKEIRKRTKRKRKSVNKREL) is disordered. Over residues 109–132 (TKKKQKKIMKKEIRKRTKRKRKSV) the composition is skewed to basic residues. Residues 359–506 (CSIQLTNPQS…DLLERVIPPA (148 aa)) form the JmjC domain. 3 residues coordinate Fe cation: His405, Asp407, and His472.

This sequence belongs to the ROX family. NO66 subfamily. Requires Fe(2+) as cofactor.

It localises to the nucleus. The catalysed reaction is N(6),N(6)-dimethyl-L-lysyl(36)-[histone H3] + 2 2-oxoglutarate + 2 O2 = L-lysyl(36)-[histone H3] + 2 formaldehyde + 2 succinate + 2 CO2. In terms of biological role, oxygenase that can act as both a histone lysine demethylase and a ribosomal histidine hydroxylase. Specifically demethylates 'Lys-4' (H3K4me) and 'Lys-36' (H3K36me) of histone H3, thereby playing a central role in histone code. The polypeptide is Bifunctional lysine-specific demethylase and histidyl-hydroxylase NO66 (Brugia malayi (Filarial nematode worm)).